A 330-amino-acid polypeptide reads, in one-letter code: Aspartate--ammonia ligase (330 aa).

The protein belongs to the class-II aminoacyl-tRNA synthetase family. AsnA subfamily.

Its subcellular location is the cytoplasm. The catalysed reaction is L-aspartate + NH4(+) + ATP = L-asparagine + AMP + diphosphate + H(+). Its pathway is amino-acid biosynthesis; L-asparagine biosynthesis; L-asparagine from L-aspartate (ammonia route): step 1/1. The polypeptide is Aspartate--ammonia ligase (Streptococcus thermophilus (strain ATCC BAA-250 / LMG 18311)).